The chain runs to 363 residues: Putative glutamate--cysteine ligase 2 (363 aa).

The protein belongs to the glutamate--cysteine ligase type 2 family. YbdK subfamily.

It catalyses the reaction L-cysteine + L-glutamate + ATP = gamma-L-glutamyl-L-cysteine + ADP + phosphate + H(+). In terms of biological role, ATP-dependent carboxylate-amine ligase which exhibits weak glutamate--cysteine ligase activity. This Streptomyces coelicolor (strain ATCC BAA-471 / A3(2) / M145) protein is Putative glutamate--cysteine ligase 2.